A 245-amino-acid polypeptide reads, in one-letter code: MEVEESKNDASVVASPAPTKLPQKRFYRQRAHSNPIADHSFDYPIHPDDYDWSQHYPTIGDKRVEFADIGCGYGGFLVTLGEMFPDKFAVGMEIRVKVSDYVMDRIQALRKLNEGQYENIACIRTNAMKYLTNFFHKGQLEKMFFLYPDPHFKKAKHKWRIINSALLSEYSYVLRQGGLIYTITDVKDLHEWMCKHIEQHPAFERLTDDEVKADVLSEKLLDSSEEGKKVTRNKGDKFVAIFRKI.

Residues glycine 70, 93-94, 126-127, and leucine 146 contribute to the S-adenosyl-L-methionine site; these read EI and NA. Aspartate 149 is a catalytic residue. 224 to 226 serves as a coordination point for S-adenosyl-L-methionine; it reads SEE.

This sequence belongs to the class I-like SAM-binding methyltransferase superfamily. TrmB family.

The protein resides in the nucleus. It catalyses the reaction guanosine(46) in tRNA + S-adenosyl-L-methionine = N(7)-methylguanosine(46) in tRNA + S-adenosyl-L-homocysteine. Its pathway is tRNA modification; N(7)-methylguanine-tRNA biosynthesis. Functionally, catalyzes the formation of N(7)-methylguanine at position 46 (m7G46) in tRNA. The polypeptide is tRNA (guanine-N(7)-)-methyltransferase (Aedes aegypti (Yellowfever mosquito)).